Here is a 230-residue protein sequence, read N- to C-terminus: Leucyl/phenylalanyl-tRNA--protein transferase (230 aa).

The protein belongs to the L/F-transferase family.

The protein localises to the cytoplasm. The enzyme catalyses N-terminal L-lysyl-[protein] + L-leucyl-tRNA(Leu) = N-terminal L-leucyl-L-lysyl-[protein] + tRNA(Leu) + H(+). It catalyses the reaction N-terminal L-arginyl-[protein] + L-leucyl-tRNA(Leu) = N-terminal L-leucyl-L-arginyl-[protein] + tRNA(Leu) + H(+). The catalysed reaction is L-phenylalanyl-tRNA(Phe) + an N-terminal L-alpha-aminoacyl-[protein] = an N-terminal L-phenylalanyl-L-alpha-aminoacyl-[protein] + tRNA(Phe). Its function is as follows. Functions in the N-end rule pathway of protein degradation where it conjugates Leu, Phe and, less efficiently, Met from aminoacyl-tRNAs to the N-termini of proteins containing an N-terminal arginine or lysine. This is Leucyl/phenylalanyl-tRNA--protein transferase from Rhodopseudomonas palustris (strain BisB18).